Here is a 1427-residue protein sequence, read N- to C-terminus: DNA-directed RNA polymerase subunit beta' (1427 aa).

Zn(2+)-binding residues include cysteine 70, cysteine 72, cysteine 85, and cysteine 88. 3 residues coordinate Mg(2+): aspartate 461, aspartate 463, and aspartate 465. Residues cysteine 810, cysteine 884, cysteine 891, and cysteine 894 each coordinate Zn(2+). Disordered regions lie at residues 1044–1065 and 1394–1427; these read QTDE…AGRG and PEAA…GDEA.

Belongs to the RNA polymerase beta' chain family. In terms of assembly, the RNAP catalytic core consists of 2 alpha, 1 beta, 1 beta' and 1 omega subunit. When a sigma factor is associated with the core the holoenzyme is formed, which can initiate transcription. It depends on Mg(2+) as a cofactor. Requires Zn(2+) as cofactor.

The catalysed reaction is RNA(n) + a ribonucleoside 5'-triphosphate = RNA(n+1) + diphosphate. DNA-dependent RNA polymerase catalyzes the transcription of DNA into RNA using the four ribonucleoside triphosphates as substrates. In Novosphingobium aromaticivorans (strain ATCC 700278 / DSM 12444 / CCUG 56034 / CIP 105152 / NBRC 16084 / F199), this protein is DNA-directed RNA polymerase subunit beta'.